The chain runs to 361 residues: Chorismate synthase (361 aa).

NADP(+) is bound by residues Arg-48 and Arg-54. FMN-binding positions include 125 to 127, 238 to 239, Gly-278, 293 to 297, and Arg-319; these read RSS, NA, and KPTSS.

Belongs to the chorismate synthase family. In terms of assembly, homotetramer. FMNH2 serves as cofactor.

It catalyses the reaction 5-O-(1-carboxyvinyl)-3-phosphoshikimate = chorismate + phosphate. Its pathway is metabolic intermediate biosynthesis; chorismate biosynthesis; chorismate from D-erythrose 4-phosphate and phosphoenolpyruvate: step 7/7. Functionally, catalyzes the anti-1,4-elimination of the C-3 phosphate and the C-6 proR hydrogen from 5-enolpyruvylshikimate-3-phosphate (EPSP) to yield chorismate, which is the branch point compound that serves as the starting substrate for the three terminal pathways of aromatic amino acid biosynthesis. This reaction introduces a second double bond into the aromatic ring system. The chain is Chorismate synthase from Escherichia coli (strain SE11).